The chain runs to 367 residues: Serine/threonine-protein kinase Sgk2 (367 aa).

A disordered region spans residues 1–28 (MASSPVGVPSPQPSRANGNINLGPSANP). The residue at position 10 (Ser10) is a Phosphoserine. Polar residues predominate over residues 15–28 (RANGNINLGPSANP). Positions 35–292 (FDFLKVIGKG…FLDIKNHMFF (258 aa)) constitute a Protein kinase domain. ATP-binding positions include 41 to 49 (IGKGNYGKV) and Lys64. The Nuclear localization signal signature appears at 68–78 (KKSILKNKEQN). The active-site Proton acceptor is the Asp159. Thr193 is subject to Phosphothreonine; by PDPK1. The AGC-kinase C-terminal domain maps to 293 to 367 (SPINWDDLYH…AQDDDDILDS (75 aa)). Ser334 and Ser356 each carry phosphoserine. At Tyr357 the chain carries Phosphotyrosine.

It belongs to the protein kinase superfamily. AGC Ser/Thr protein kinase family. In terms of processing, activated by phosphorylation on Ser-356 by an unknown kinase (may be mTORC2 but not confirmed), transforming it into a substrate for PDPK1 which then phosphorylates it on Thr-193.

It is found in the cytoplasm. It localises to the nucleus. The enzyme catalyses L-seryl-[protein] + ATP = O-phospho-L-seryl-[protein] + ADP + H(+). It catalyses the reaction L-threonyl-[protein] + ATP = O-phospho-L-threonyl-[protein] + ADP + H(+). Its activity is regulated as follows. Two specific sites, one in the kinase domain (Thr-193) and the other in the C-terminal regulatory region (Ser-356), need to be phosphorylated for its full activation. Serine/threonine-protein kinase which is involved in the regulation of a wide variety of ion channels, membrane transporters, cell growth, survival and proliferation. Up-regulates Na(+) channels: SCNN1A/ENAC, K(+) channels: KCNA3/Kv1.3, KCNE1 and KCNQ1, amino acid transporter: SLC6A19, glutamate transporter: SLC1A6/EAAT4, glutamate receptors: GRIA1/GLUR1 and GRIK2/GLUR6, Na(+)/H(+) exchanger: SLC9A3/NHE3, and the Na(+)/K(+) ATPase. This Mus musculus (Mouse) protein is Serine/threonine-protein kinase Sgk2 (Sgk2).